The primary structure comprises 427 residues: Enolase (427 aa).

Glutamine 163 serves as a coordination point for (2R)-2-phosphoglycerate. Glutamate 205 serves as the catalytic Proton donor. 3 residues coordinate Mg(2+): aspartate 242, glutamate 283, and aspartate 310. (2R)-2-phosphoglycerate-binding residues include lysine 335, arginine 364, serine 365, and lysine 386. The Proton acceptor role is filled by lysine 335.

Belongs to the enolase family. The cofactor is Mg(2+).

The protein localises to the cytoplasm. The protein resides in the secreted. It localises to the cell surface. It catalyses the reaction (2R)-2-phosphoglycerate = phosphoenolpyruvate + H2O. The protein operates within carbohydrate degradation; glycolysis; pyruvate from D-glyceraldehyde 3-phosphate: step 4/5. Its function is as follows. Catalyzes the reversible conversion of 2-phosphoglycerate (2-PG) into phosphoenolpyruvate (PEP). It is essential for the degradation of carbohydrates via glycolysis. The polypeptide is Enolase (Salinispora tropica (strain ATCC BAA-916 / DSM 44818 / JCM 13857 / NBRC 105044 / CNB-440)).